A 616-amino-acid polypeptide reads, in one-letter code: 2-isopropylmalate synthase (616 aa).

The tract at residues 1 to 34 (MSPNDAFISAPAKIETPVGPRNEGQPAWNKQRGS) is disordered. The 275-residue stretch at 67–341 (PQWCAVDLRD…DPQLDFTDIR (275 aa)) folds into the Pyruvate carboxyltransferase domain. D76, H280, H282, and N316 together coordinate Mg(2+). Positions 490 to 616 (RTAPVEQIAL…NHEAVLAGGV (127 aa)) are regulatory domain.

It belongs to the alpha-IPM synthase/homocitrate synthase family. LeuA type 2 subfamily. In terms of assembly, homodimer. Mg(2+) serves as cofactor.

It localises to the cytoplasm. The catalysed reaction is 3-methyl-2-oxobutanoate + acetyl-CoA + H2O = (2S)-2-isopropylmalate + CoA + H(+). It participates in amino-acid biosynthesis; L-leucine biosynthesis; L-leucine from 3-methyl-2-oxobutanoate: step 1/4. Inhibited by L-leucine, the pathway end product. Functionally, catalyzes the condensation of the acetyl group of acetyl-CoA with 3-methyl-2-oxobutanoate (2-ketoisovalerate) to form 3-carboxy-3-hydroxy-4-methylpentanoate (2-isopropylmalate). Complements an E.coli leuA deletion. This chain is 2-isopropylmalate synthase, found in Corynebacterium glutamicum (strain ATCC 13032 / DSM 20300 / JCM 1318 / BCRC 11384 / CCUG 27702 / LMG 3730 / NBRC 12168 / NCIMB 10025 / NRRL B-2784 / 534).